The chain runs to 372 residues: DNA/RNA-binding protein ALBA4 (372 aa).

Belongs to the histone-like Alba family. In terms of assembly, identified in a TARE6-associated complex consisting of over 30 proteins and including ALBA1, ALBA2 and ALBA4; the complex binds to the non-coding subtelomeric repeat region TARE6.

Its subcellular location is the nucleus. It localises to the chromosome. The protein resides in the telomere. The protein localises to the cytoplasm. In terms of biological role, possesses DNA- and RNA-binding activities. Binds to DNA fragments longer than 14 base pairs with relaxed sequence specificity. Associates with the subtelomeric TARE6 repeats. Regulates the abundance of transcript sub-populations in a stage-specific manner. Regulates activation of male gametocytes. Participates in the coordination of sporozoite development in the oocyst. The polypeptide is DNA/RNA-binding protein ALBA4 (Plasmodium falciparum (isolate 3D7)).